Reading from the N-terminus, the 82-residue chain is RNA-binding protein Hfq (82 aa).

One can recognise a Sm domain in the interval 9–69 (DQLLNTARKD…ISTIIPAKII (61 aa)).

This sequence belongs to the Hfq family. In terms of assembly, homohexamer.

RNA chaperone that binds small regulatory RNA (sRNAs) and mRNAs to facilitate mRNA translational regulation in response to envelope stress, environmental stress and changes in metabolite concentrations. Also binds with high specificity to tRNAs. This chain is RNA-binding protein Hfq, found in Leptospira borgpetersenii serovar Hardjo-bovis (strain L550).